We begin with the raw amino-acid sequence, 1148 residues long: Envelopment polyprotein (1148 aa).

The signal sequence occupies residues 1-23 (MGELSPVCLCLLLQGLLLCNTGA). The Lumenal portion of the chain corresponds to 24–496 (ARNLNELKME…PGLHGWATML (473 aa)). 6 disulfides stabilise this stretch: Cys34-Cys159, Cys68-Cys165, Cys117-Cys136, Cys141-Cys146, Cys183-Cys193, and Cys218-Cys257. Residue Asn142 is glycosylated (N-linked (GlcNAc...) asparagine; by host). A glycan (N-linked (GlcNAc...) asparagine; by host) is linked at Asn357. 4 cysteine pairs are disulfide-bonded: Cys386–Cys445, Cys390–Cys399, Cys415–Cys434, and Cys462–Cys485. Residue Asn409 is glycosylated (N-linked (GlcNAc...) asparagine; by host). A helical membrane pass occupies residues 497–517 (LLLTFCFGWVLIPTITMILLK). Residues 518 to 637 (ILIAFAYLCS…LSLFRYRSRF (120 aa)) lie on the Cytoplasmic side of the membrane. The binding to the ribonucleoprotein stretch occupies residues 526 to 543 (CSKYNTDSKFRILIEKVK). 2 CCHC-type zinc fingers span residues 555–575 (CEVC…RKSC) and 580–601 (CPYC…FKVC). 3 binding to the ribonucleoprotein regions span residues 598–615 (FKVC…RKSL), 602–613 (KLTSRFQENLRK), and 621–635 (MQGC…RYRS). The ITAM domain occupies 621–644 (MQGCYRTLSLFRYRSRFFVGLVWC). The YxxL motif lies at 625–628 (YRTL). The helical transmembrane segment at 638-658 (FVGLVWCVLLVLELIVWAASA) threads the bilayer. At 659 to 1115 (ETQNLNAGWT…WILGVLNGNW (457 aa)) the chain is on the lumenal side. 8 disulfides stabilise this stretch: Cys745-Cys780, Cys749-Cys787, Cys761-Cys894, Cys775-Cys905, Cys790-Cys913, Cys816-Cys825, Cys833-Cys842, and Cys873-Cys877. Residues 767–787 (YEYETGWGCNPPDCPGVGTGC) form a fusion loop region. A glycan (N-linked (GlcNAc...) asparagine; by host) is linked at Asn937. 5 cysteine pairs are disulfide-bonded: Cys979–Cys1009, Cys1002–Cys1054, Cys1019–Cys1024, Cys1055–Cys1060, and Cys1094–Cys1098. Residues 1116–1136 (MVVAVLVVLLILSILLFTLCC) traverse the membrane as a helical segment. Binding to the ribonucleoprotein stretches follow at residues 1131–1143 (LFTL…PSYR) and 1131–1148 (LFTL…EHKP). The Cytoplasmic segment spans residues 1137–1148 (PRRPSYRKEHKP).

This sequence belongs to the hantavirus envelope glycoprotein family. As to quaternary structure, homodimer. Homotetramer; forms heterotetrameric Gn-Gc spikes in the pre-fusion conformation. Interacts (via C-terminus) with the nucleoprotein. Interacts with host TUFM; this interaction contributes to the virus-induced degradation of mitochondria by autophagy, which leads to degradation of host MAVS and inhibition of type I interferon (IFN) responses. Interacts with host MAP1LC3B; this interaction contributes to the virus-induced degradation of mitochondria by autophagy, which leads to degradation of host MAVS and inhibition of type I interferon (IFN) responses. Homodimer. Homotetramer; forms heterotetrameric Gn-Gc spikes in the pre-fusion conformation. Homotrimer; forms homotrimer in the post-fusion conformation at acidic pH. Interacts (via C-terminus) with the nucleoprotein. In terms of processing, envelope polyprotein precursor is quickly cleaved in vivo just after synthesis, presumably by host signal peptidase.

The protein localises to the virion membrane. The protein resides in the host cell surface. It is found in the host Golgi apparatus membrane. Its subcellular location is the host endoplasmic reticulum membrane. It localises to the host mitochondrion. Functionally, forms homotetramers with glycoprotein C at the surface of the virion. Attaches the virion to host cell receptors including integrin ITGAV/ITGB3. This attachment induces virion internalization predominantly through clathrin-dependent endocytosis. Mediates the assembly and budding of infectious virus particles through its interaction with the nucleocapsid protein and the viral genome. May dysregulate normal immune and endothelial cell responses through an ITAM motif. Translocates to mitochondria, binds to host TUFM and recruits MAP1LC3B. These interactions induce mitochondrial autophagy and therefore destruction of host MAVS leading to inhibition of type I interferon (IFN) responses. Concomitant breakdown of glycoprotein N is apparently prevented by the nucleoprotein that may inhibit Gn-stimulated autophagosome-lysosome fusion. Interacts with the viral genomic RNA. In terms of biological role, forms homotetramers with glycoprotein N at the surface of the virion. Attaches the virion to host cell receptors including integrin ITGAV/ITGB3. This attachment induces virion internalization predominantly through clathrin-dependent endocytosis. Class II fusion protein that promotes fusion of viral membrane with host endosomal membrane after endocytosis of the virion. The protein is Envelopment polyprotein (GP) of Homo sapiens (Human).